A 342-amino-acid polypeptide reads, in one-letter code: Bifunctional terpene synthase Agr4 (342 aa).

Aspartate 87, asparagine 222, serine 226, and glutamate 230 together coordinate Mg(2+). The DDXXD motif motif lies at 87–91 (DEVSD). Residues arginine 308 and tyrosine 309 each contribute to the (2E,6E)-farnesyl diphosphate site.

This sequence belongs to the terpene synthase family. Mg(2+) is required as a cofactor.

The enzyme catalyses (2E,6E)-farnesyl diphosphate = delta-cadinene + diphosphate. The catalysed reaction is (2E,6E)-farnesyl diphosphate = gamma-muurolene + diphosphate. It carries out the reaction (2E,6E)-farnesyl diphosphate = beta-copaene + diphosphate. It catalyses the reaction (2E)-geranyl diphosphate = beta-myrcene + diphosphate. Terpene cyclase that catalyzes the cyclization of farnesyl diphosphate (FPP) to various sesquiterpenes, including beta-copaene, alpha-cubebene, cadina-1(6),4-diene, gamma-muurolene, delta-cadinene, epizonarene, epicubenol and cubenol. Agr4 is also able to use the monoterpene precursor geranyl diphosphate (GPP) as substrates to synthesize the monoterpene beta-myrcene. Delta-cadinene is the major product of Agr4. The chain is Bifunctional terpene synthase Agr4 from Cyclocybe aegerita (Black poplar mushroom).